A 146-amino-acid chain; its full sequence is UPF0260 protein Sbal_1871 (146 aa).

The protein belongs to the UPF0260 family.

This chain is UPF0260 protein Sbal_1871, found in Shewanella baltica (strain OS155 / ATCC BAA-1091).